The primary structure comprises 282 residues: Formamidopyrimidine-DNA glycosylase (282 aa).

Catalysis depends on proline 2, which acts as the Schiff-base intermediate with DNA. Glutamate 3 serves as the catalytic Proton donor. Lysine 60 (proton donor; for beta-elimination activity) is an active-site residue. Residues histidine 99, arginine 118, and lysine 163 each contribute to the DNA site. The FPG-type zinc-finger motif lies at 248-282; it reads WVYRRSGKNCKKCGEKILREKICGRSTHWCPNCQK. The active-site Proton donor; for delta-elimination activity is arginine 272.

It belongs to the FPG family. As to quaternary structure, monomer. It depends on Zn(2+) as a cofactor.

It carries out the reaction Hydrolysis of DNA containing ring-opened 7-methylguanine residues, releasing 2,6-diamino-4-hydroxy-5-(N-methyl)formamidopyrimidine.. The enzyme catalyses 2'-deoxyribonucleotide-(2'-deoxyribose 5'-phosphate)-2'-deoxyribonucleotide-DNA = a 3'-end 2'-deoxyribonucleotide-(2,3-dehydro-2,3-deoxyribose 5'-phosphate)-DNA + a 5'-end 5'-phospho-2'-deoxyribonucleoside-DNA + H(+). In terms of biological role, involved in base excision repair of DNA damaged by oxidation or by mutagenic agents. Acts as a DNA glycosylase that recognizes and removes damaged bases. Has a preference for oxidized purines, such as 7,8-dihydro-8-oxoguanine (8-oxoG). Has AP (apurinic/apyrimidinic) lyase activity and introduces nicks in the DNA strand. Cleaves the DNA backbone by beta-delta elimination to generate a single-strand break at the site of the removed base with both 3'- and 5'-phosphates. The polypeptide is Formamidopyrimidine-DNA glycosylase (Prochlorococcus marinus (strain NATL2A)).